We begin with the raw amino-acid sequence, 447 residues long: UDP-glycosyltransferase 79B9 (447 aa).

UDP-alpha-D-glucose is bound by residues Ser-260, 319–321 (VQQ), 336–344 (HCGFGSMWE), and 358–361 (LCDQ).

The protein belongs to the UDP-glycosyltransferase family.

In Arabidopsis thaliana (Mouse-ear cress), this protein is UDP-glycosyltransferase 79B9 (UGT79B9).